The sequence spans 230 residues: Aquaporin Z (230 aa).

The next 2 helical transmembrane spans lie at 9 to 29 and 35 to 55; these read AELIGTFWLVLGGCGSAVLAA and IGVLGVAFAFGLTVLTMAFAI. The NPA 1 motif lies at 64–66; that stretch reads NPA. 3 helical membrane-spanning segments follow: residues 83–103, 131–151, and 160–180; these read LPYVIAQVIGAILAAGVIYLI, LGAGFVSEVVMTAMFLVVIMG, and GFAPIAIGLALTLIHLISIPV. Residues 186-188 carry the NPA 2 motif; sequence NPA. A helical membrane pass occupies residues 194 to 214; sequence ALFVGGWALQQLWLFWVAPLI.

The protein belongs to the MIP/aquaporin (TC 1.A.8) family. As to quaternary structure, homotetramer.

The protein localises to the cell inner membrane. It carries out the reaction H2O(in) = H2O(out). Channel that permits osmotically driven movement of water in both directions. It is involved in the osmoregulation and in the maintenance of cell turgor during volume expansion in rapidly growing cells. It mediates rapid entry or exit of water in response to abrupt changes in osmolarity. In Pseudomonas putida (strain ATCC 47054 / DSM 6125 / CFBP 8728 / NCIMB 11950 / KT2440), this protein is Aquaporin Z.